A 212-amino-acid chain; its full sequence is Imidazole glycerol phosphate synthase subunit HisH (212 aa).

The Glutamine amidotransferase type-1 domain maps to 3-212 (DVAIIDYGMG…MLANFISWAP (210 aa)). Cys82 serves as the catalytic Nucleophile. Catalysis depends on residues His192 and Glu194.

Heterodimer of HisH and HisF.

The protein localises to the cytoplasm. It catalyses the reaction 5-[(5-phospho-1-deoxy-D-ribulos-1-ylimino)methylamino]-1-(5-phospho-beta-D-ribosyl)imidazole-4-carboxamide + L-glutamine = D-erythro-1-(imidazol-4-yl)glycerol 3-phosphate + 5-amino-1-(5-phospho-beta-D-ribosyl)imidazole-4-carboxamide + L-glutamate + H(+). The catalysed reaction is L-glutamine + H2O = L-glutamate + NH4(+). Its pathway is amino-acid biosynthesis; L-histidine biosynthesis; L-histidine from 5-phospho-alpha-D-ribose 1-diphosphate: step 5/9. Functionally, IGPS catalyzes the conversion of PRFAR and glutamine to IGP, AICAR and glutamate. The HisH subunit catalyzes the hydrolysis of glutamine to glutamate and ammonia as part of the synthesis of IGP and AICAR. The resulting ammonia molecule is channeled to the active site of HisF. This is Imidazole glycerol phosphate synthase subunit HisH from Aromatoleum aromaticum (strain DSM 19018 / LMG 30748 / EbN1) (Azoarcus sp. (strain EbN1)).